A 325-amino-acid chain; its full sequence is NADH-quinone oxidoreductase subunit H (325 aa).

Helical transmembrane passes span 11–31 (ILLSILKAVVILLVVVTCGAF), 81–101 (VIFTLAPMIAFTSLLLAFAIV), 114–134 (IGILFFLMMAGLAVYAVLFAG), 154–174 (LSYEVFLGLSLMGVVAQAGSF), 186–206 (IWNVIPQFFGFVTFAIAGVAV), 237–257 (FFVGEYIGIVTISALMVTLFF), 265–285 (LPPFIWFALKTAFFMMMFILI), and 304–324 (VCLPLTLVNLLVTAAVILWQA).

The protein belongs to the complex I subunit 1 family. NDH-1 is composed of 13 different subunits. Subunits NuoA, H, J, K, L, M, N constitute the membrane sector of the complex.

Its subcellular location is the cell inner membrane. It carries out the reaction a quinone + NADH + 5 H(+)(in) = a quinol + NAD(+) + 4 H(+)(out). Its function is as follows. NDH-1 shuttles electrons from NADH, via FMN and iron-sulfur (Fe-S) centers, to quinones in the respiratory chain. The immediate electron acceptor for the enzyme in this species is believed to be ubiquinone. Couples the redox reaction to proton translocation (for every two electrons transferred, four hydrogen ions are translocated across the cytoplasmic membrane), and thus conserves the redox energy in a proton gradient. This subunit may bind ubiquinone. The sequence is that of NADH-quinone oxidoreductase subunit H from Enterobacter sp. (strain 638).